Here is a 204-residue protein sequence, read N- to C-terminus: uncharacterized protein (204 aa).

The next 4 membrane-spanning stretches (helical) occupy residues 21–50 (AWIVFFTIPLVITPLPYVGFLAFFFILLFF), 92–114 (FFTALLYYLFTKFYAVLFFWWWF), 150–172 (LGLRWSFIGLVLLTIAVLLVLSI), and 176–198 (LLASFVVLLLSVVLAHFTAETIL).

It is found in the cell membrane. This is an uncharacterized protein from Aquifex aeolicus (strain VF5).